The sequence spans 134 residues: Small ribosomal subunit protein uS9 (134 aa).

The segment at 109–134 (DARRTEPHKPSKSSKGPRAKRQKSYR) is disordered. Over residues 118-134 (PSKSSKGPRAKRQKSYR) the composition is skewed to basic residues.

The protein belongs to the universal ribosomal protein uS9 family.

The protein is Small ribosomal subunit protein uS9 of Methanococcus maripaludis (strain C7 / ATCC BAA-1331).